Here is a 337-residue protein sequence, read N- to C-terminus: DNA-directed RNA polymerase subunit alpha (337 aa).

Residues 1-233 are alpha N-terminal domain (alpha-NTD); it reads MVREEVAVST…DLFIPFLHAE (233 aa). The alpha C-terminal domain (alpha-CTD) stretch occupies residues 266 to 337; it reads GIALKCIFID…FTIDLPKNKF (72 aa).

Belongs to the RNA polymerase alpha chain family. As to quaternary structure, in plastids the minimal PEP RNA polymerase catalytic core is composed of four subunits: alpha, beta, beta', and beta''. When a (nuclear-encoded) sigma factor is associated with the core the holoenzyme is formed, which can initiate transcription.

The protein resides in the plastid. The protein localises to the chloroplast. It catalyses the reaction RNA(n) + a ribonucleoside 5'-triphosphate = RNA(n+1) + diphosphate. In terms of biological role, DNA-dependent RNA polymerase catalyzes the transcription of DNA into RNA using the four ribonucleoside triphosphates as substrates. The protein is DNA-directed RNA polymerase subunit alpha of Liriodendron tulipifera (Tuliptree).